Reading from the N-terminus, the 207-residue chain is Small ribosomal subunit protein uS10m (207 aa).

The transit peptide at 1–14 (MNMFRQAVRSFVRY) directs the protein to the mitochondrion.

It belongs to the universal ribosomal protein uS10 family. In terms of assembly, part of the mitochondrial small ribosomal subunit.

The protein resides in the mitochondrion. Functionally, involved in mitochondrial genome encoded proteins translation. Involved in the binding of tRNA to the ribosomes. The chain is Small ribosomal subunit protein uS10m (RSM10) from Kluyveromyces lactis (strain ATCC 8585 / CBS 2359 / DSM 70799 / NBRC 1267 / NRRL Y-1140 / WM37) (Yeast).